We begin with the raw amino-acid sequence, 463 residues long: T-box transcription factor TBX1-B (463 aa).

Disordered regions lie at residues 39–58 and 75–102; these read SPSP…PCSA and GASS…APVK. Residues 75–96 are compositionally biased toward low complexity; the sequence is GASSSSCASSTPGSGSTGSSSG. A DNA-binding region (T-box) is located at residues 119-297; sequence LWDEFNQLGT…SNPFAKGFRD (179 aa). Disordered stretches follow at residues 320 to 343 and 367 to 406; these read RSRN…RREY and SPSL…HHHP. The segment covering 323–332 has biased composition (polar residues); it reads NPVSSPPQNG. The segment covering 333-343 has biased composition (basic and acidic residues); the sequence is SDKDGDGRREY. Low complexity predominate over residues 367-380; sequence SPSLPVPGGLVPLS. The Nuclear localization signal motif lies at 420-431; it reads KTRPAPYPLPSI.

Binds DNA as a dimer. Interacts with dscr6/ripply3.

Its subcellular location is the nucleus. Probable transcriptional regulator involved in developmental processes. Binds to the palindromic T site 5'-TTCACACCTAGGTGTGAA-3' DNA sequence. Induces pre-placodal ectoderm (PPE) gene expression in regions where RIPPLY3 is absent. Plays a role in the formation of the anteroposterior (AP) axis during embryonic development; required to establish the posterolateral border of the pre-placodal ectoderm (PPE) acting downstream of the retinoic acid receptor (RAR) signaling. Functionally, probable transcriptional regulator involved in developmental processes. Binds to the palindromic T site 5'-TTCACACCTAGGTGTGAA-3' DNA sequence. Is required for normal development of the pharyngeal arch arteries. The sequence is that of T-box transcription factor TBX1-B (tbx1-b) from Xenopus laevis (African clawed frog).